The primary structure comprises 249 residues: 6-phosphogluconolactonase 3 (249 aa).

The protein belongs to the glucosamine/galactosamine-6-phosphate isomerase family. 6-phosphogluconolactonase subfamily.

The protein resides in the cytoplasm. It is found in the nucleus. The catalysed reaction is 6-phospho-D-glucono-1,5-lactone + H2O = 6-phospho-D-gluconate + H(+). It participates in carbohydrate degradation; pentose phosphate pathway; D-ribulose 5-phosphate from D-glucose 6-phosphate (oxidative stage): step 2/3. Functionally, hydrolysis of 6-phosphogluconolactone to 6-phosphogluconate. The protein is 6-phosphogluconolactonase 3 (SOL3) of Saccharomyces cerevisiae (strain RM11-1a) (Baker's yeast).